Reading from the N-terminus, the 317-residue chain is uncharacterized protein (317 aa).

The protein belongs to the asfivirus F317L family.

The protein resides in the virion. This is an uncharacterized protein from African swine fever virus (isolate Tick/South Africa/Pretoriuskop Pr4/1996) (ASFV).